A 141-amino-acid polypeptide reads, in one-letter code: Protein E6 (141 aa).

2 zinc fingers span residues 27-64 (CRFC…CSSC) and 101-137 (CKFC…CRHC).

Belongs to the papillomaviridae E6 protein family. In terms of assembly, forms homodimers. Interacts with ubiquitin-protein ligase UBE3A/E6-AP; this interaction stimulates UBE3A ubiquitin activity. Interacts with host BAK1.

It is found in the host cytoplasm. Its subcellular location is the host nucleus. In terms of biological role, plays a major role in the induction and maintenance of cellular transformation. E6 associates with host UBE3A/E6-AP ubiquitin-protein ligase and modulates its activity. Protects host keratinocytes from apoptosis by mediating the degradation of host BAK1. May also inhibit host immune response. The polypeptide is Protein E6 (Human papillomavirus 17).